The chain runs to 1040 residues: Multidrug resistance protein MdtB (1040 aa).

Helical transmembrane passes span 25 to 45 (LLMAAILLAGIIGYRFLPVAA), 347 to 367 (LMLAIALVVMIIYLFLRNIPA), 369 to 389 (IIPGVAVPLSLIGTFAVMVFL), 396 to 416 (LTLMALTIATGFVVDDAIVVI), 440 to 460 (IGFTIISLTFSLIAVLIPLLF), 472 to 492 (FAVTLAVAILISAVVSLTLTP), 537 to 557 (WLTLSVAFATLLLSVMLWIVI), 863 to 883 (LGSTVWLIVAAVVAMYIVLGV), 888 to 908 (FIHPITILSTLPTAGVGALLA), 910 to 930 (IIAGSELDIIAIIGIILLIGI), 968 to 988 (ILMTTLAALLGALPLMLSTGV), and 998 to 1018 (IAMVGGLLVSQVLTLFTTPVI).

It belongs to the resistance-nodulation-cell division (RND) (TC 2.A.6) family. MdtB subfamily. As to quaternary structure, part of a tripartite efflux system composed of MdtA, MdtB and MdtC. MdtB forms a heteromultimer with MdtC.

It localises to the cell inner membrane. This is Multidrug resistance protein MdtB from Salmonella paratyphi A (strain ATCC 9150 / SARB42).